Here is a 90-residue protein sequence, read N- to C-terminus: Small ribosomal subunit protein bS18B (90 aa).

The protein belongs to the bacterial ribosomal protein bS18 family. As to quaternary structure, part of the 30S ribosomal subunit. Forms a tight heterodimer with protein bS6.

In terms of biological role, binds as a heterodimer with protein bS6 to the central domain of the 16S rRNA, where it helps stabilize the platform of the 30S subunit. This is Small ribosomal subunit protein bS18B from Roseiflexus sp. (strain RS-1).